The chain runs to 295 residues: MANLKEIKLKIGSVKNTQKTTKAMKLVSSAKLTRTRQLSEQARSYAHKINDVLSDIAARVSKVQDDGNIGRSFLQNDNPKTVDIVFVTADKGLCGGFNMATIKTVSRLISEYEAKGTKVRLRAAGRKGVDFFSFQGMTIEQKATDLSSAPDYDRAAEFIHNVVEDFKNEVTDKVVIVYNGFLNMLSQEIRVRDLLPISLDDVKIQDNASMLNIEPEEDEDEVLNELTDKYIDFNMYYALIDSLAAEHSARMQAMEAASKNAKEKVNSLTVEYNKARQAAITTELIEIISGVEALK.

Belongs to the ATPase gamma chain family. F-type ATPases have 2 components, CF(1) - the catalytic core - and CF(0) - the membrane proton channel. CF(1) has five subunits: alpha(3), beta(3), gamma(1), delta(1), epsilon(1). CF(0) has three main subunits: a, b and c.

Its subcellular location is the cell inner membrane. In terms of biological role, produces ATP from ADP in the presence of a proton gradient across the membrane. The gamma chain is believed to be important in regulating ATPase activity and the flow of protons through the CF(0) complex. The sequence is that of ATP synthase gamma chain from Aliarcobacter butzleri (strain RM4018) (Arcobacter butzleri).